Consider the following 122-residue polypeptide: Large ribosomal subunit protein uL14 (122 aa).

This sequence belongs to the universal ribosomal protein uL14 family. As to quaternary structure, part of the 50S ribosomal subunit. Forms a cluster with proteins L3 and L19. In the 70S ribosome, L14 and L19 interact and together make contacts with the 16S rRNA in bridges B5 and B8.

Binds to 23S rRNA. Forms part of two intersubunit bridges in the 70S ribosome. This chain is Large ribosomal subunit protein uL14, found in Pelagibacter ubique (strain HTCC1062).